The following is a 177-amino-acid chain: Endoribonuclease YbeY (177 aa).

Zn(2+)-binding residues include His-142, His-146, and His-152.

Belongs to the endoribonuclease YbeY family. Zn(2+) serves as cofactor.

It is found in the cytoplasm. Functionally, single strand-specific metallo-endoribonuclease involved in late-stage 70S ribosome quality control and in maturation of the 3' terminus of the 16S rRNA. The polypeptide is Endoribonuclease YbeY (Synechococcus sp. (strain CC9311)).